A 1400-amino-acid chain; its full sequence is MNQEVMNLFNPQAPAQTFDSIRISIASPEKILSWSYGEIKKPETINYRTFKPERDGLFCARIFGPIKDYECLCGKYKRMKYKGIICEKCGVEVTLSRVRRERMGHIELAAPVAHIWFLKSLPSRIGTLLDMTLKDIERVLYFENYIVTEPGLTSLKEHQLLSEEEYMIAVDEFGEDQFTALIGAEAIYELLASMELEKIAADLRVDLAETTSDLKQKKLMKRLKIVENFLESGNRPEWMIMKIVPVIPPDLRPLVPLDGGRFATSDLNDLYRRVINRNNRLKRLIELRAPGIIIRNEKRMLQEAVDALFDNGRRGRVITGANKRPLKSLSDMLKGKQGRFRQNLLGKRVDYSGRSVIVTGPELKLHQCGLPKKMALELFKPFIYARLDAKGYSSTVKQAKKLVEKERPEVWDILDEVIREHPVLLNRAPTLHRLGIQAFEPTLIEGKAIQLHPLVCTAFNADFDGDQMAVHVPLSLEAQLEARVLMMSTNNILHPANGAPIIVPSQDMVLGLYYLSIVAEKEPGEGMIFADMGELQHALENKVVTLHTKIKGRFKTVDAEGNPVSKIYDTTPGRMIMGELLPKNVNVPFDICNQEMTKKNISKMIDHVYRHCGQKETVIFCDRIMQLGFAHACRAGISFGKDDMVIPESKAKIVAETEALTTEYEQQYNDGLITQGEKYNKVVDAWGKATDKITEEMMARLKAVEFDPVTGRQKQMNSVYMMSHSGARGSVNQMRQLGGMRGLMAKPSGEIIETPIISNFKEGLTVNEYFNSTHGARKGLADTALKTANSGYLTRRLVDVAQDAIISEVDCGAEIGLTMQPIVDAGQIVASIGQRVLGRTALDPILHPVTGEVIVEAGRMIEEKDVEIIEKAGIQSIRIRSALTCETRNGVCAKCYGRDLARGTPVNQGEAVGVIAAQSIGEPGTQLTMRTFHLGGTAQVVDSSYLEASYEGTVKLRNRNVVRNSDGNLVVMGRNMAVLILDATGKERAVHRVTYGSRLFVDEGDTVKRGQRIAEWDPYTRPIMTEVEGYVEFEDLVDGLSVSETADESTGITKRVVIDWRSTPRGSDLKPAMVIKDKAGKILKLSKGGDARFLLSVESILSVEPGAHVKAGDVIARLPMESAKTKDITGGLPRVAELFEARRPKDHAIIAEIDGTVRFGRDYKNKRRIIIEPNDDTIEPVEYLIPKGKPFHLQDGDVIEKGEYILDGNPAPHDILAIKGVEALASYLVNEIQEVYRLQGVLINDKHIEVIVRQMLQKVEITESGDTGYIPGDHVDRIELEEINERLIEEGKKPGSGNPVLLGITKASLQTPSFISAASFQETTRVLTEAAVAGKMDTLQGLKENVIVGRLIPAGTGGMTNQIRRIATARDELIIDERRKTSGSAEANAMLVDMTNNAAE.

Residues Cys-71, Cys-73, Cys-86, and Cys-89 each coordinate Zn(2+). Residues Asp-462, Asp-464, and Asp-466 each coordinate Mg(2+). Zn(2+) is bound by residues Cys-811, Cys-885, Cys-892, and Cys-895.

It belongs to the RNA polymerase beta' chain family. The RNAP catalytic core consists of 2 alpha, 1 beta, 1 beta' and 1 omega subunit. When a sigma factor is associated with the core the holoenzyme is formed, which can initiate transcription. Mg(2+) serves as cofactor. The cofactor is Zn(2+).

The catalysed reaction is RNA(n) + a ribonucleoside 5'-triphosphate = RNA(n+1) + diphosphate. DNA-dependent RNA polymerase catalyzes the transcription of DNA into RNA using the four ribonucleoside triphosphates as substrates. The polypeptide is DNA-directed RNA polymerase subunit beta' (Brucella ovis (strain ATCC 25840 / 63/290 / NCTC 10512)).